We begin with the raw amino-acid sequence, 388 residues long: Muscleblind-like protein 1 (388 aa).

Thr-6 is subject to Phosphothreonine. 4 consecutive C3H1-type zinc fingers follow at residues 13–41, 47–73, 179–207, and 215–241; these read WLTL…HPSK, NGRV…HPPP, TDRL…HPAD, and DNTV…HPPA.

The protein belongs to the muscleblind family. As to quaternary structure, interacts with DDX1 and YBX1. Interacts with HNRNPH1; the interaction in RNA-independent. Interacts with RBPMS; the interaction allows cooperative assembly of RNA-bound stable cell-specific alternative splicing regulatory complexes. In terms of tissue distribution, highly expressed in cardiac, skeletal muscle and during myoblast differentiation. Weakly expressed in other tissues (at protein level). Expressed in heart, brain, placenta, lung, liver, skeletal muscle, kidney and pancreas.

The protein resides in the nucleus. The protein localises to the cytoplasm. It localises to the cytoplasmic granule. Functionally, mediates pre-mRNA alternative splicing regulation. Acts either as activator or repressor of splicing on specific pre-mRNA targets. Inhibits cardiac troponin-T (TNNT2) pre-mRNA exon inclusion but induces insulin receptor (IR) pre-mRNA exon inclusion in muscle. Antagonizes the alternative splicing activity pattern of CELF proteins. Regulates the TNNT2 exon 5 skipping through competition with U2AF2. Inhibits the formation of the spliceosome A complex on intron 4 of TNNT2 pre-mRNA. Binds to the stem-loop structure within the polypyrimidine tract of TNNT2 intron 4 during spliceosome assembly. Binds to the 5'-YGCU(U/G)Y-3'consensus sequence. Binds to the IR RNA. Binds to expanded CUG repeat RNA, which folds into a hairpin structure containing GC base pairs and bulged, unpaired U residues. Together with RNA binding proteins RBPMS and RBFOX2, activates vascular smooth muscle cells alternative splicing events. Regulates NCOR2 alternative splicing. The polypeptide is Muscleblind-like protein 1 (MBNL1) (Homo sapiens (Human)).